The chain runs to 645 residues: MKNMSCKLVVSVTLFFSFLTIGPLAHAQNSSEKEVIVVYKNKAGKETILDSDADVEQQYKHLPAVAVTADQETVKELKQDPDILYVENNVSFTAADSTDFKVLSDGTDTSDNFEQWNLEPIQVKQAWKAGLTGKNIKIAVIDSGISPHDDLSIAGGYSAVSYTSSYKDDNGHGTHVAGIIGAKHNGYGIDGIAPEAQIYAVKALDQNGSGDLQSLLQGIDWSIANRMDIVNMSLGTTSDSKILHDAVNKAYEQGVLLVAASGNDGNGKPVNYPAAYSSVVAVSATNEKNQLASFSTTGDEVEFSAPGTNITSTYLNQYYATGSGTSQATPHAAAMFALLKQRDPAETNVQLREEMRKNIVDLGTAGRDQQFGYGLIQYKAQATDSAYAAAEQAVKKAEQTKAQIDINKARELISQLPNSDAKTALHKRLDKVQSYRNVKDAKDKVAKAEKYKTQQTVDTAQTAINKLPNGTDKKNLQKRLDQVKRYIASKQAKDKVAKAEKSKKKTDVDSAQSAIGKLPASSEKTSLQKRLNKVKSTNLKTAQQSVSAAEKKSTDANAAKAQSAVNQLQAGKDKTALQKRLDKVKKKVAAAEAKKVETAKAKVKKAEKDKTKKSKTSAQSAVNQLKASNEKTKLQKRLNAVKPKK.

An N-terminal signal peptide occupies residues 1–27 (MKNMSCKLVVSVTLFFSFLTIGPLAHA). Residues 28 to 103 (QNSSEKEVIV…AADSTDFKVL (76 aa)) constitute a propeptide that is removed on maturation. The 268-residue stretch at 115-382 (QWNLEPIQVK…YGLIQYKAQA (268 aa)) folds into the Peptidase S8 domain. Residues Asp-142, His-172, and Ser-326 each act as charge relay system in the active site. Disordered stretches follow at residues 490 to 577 (KQAK…KTAL) and 591 to 645 (AEAK…KPKK). The segment covering 491–508 (QAKDKVAKAEKSKKKTDV) has biased composition (basic and acidic residues). The span at 522-547 (SEKTSLQKRLNKVKSTNLKTAQQSVS) shows a compositional bias: polar residues. Residues 592–610 (EAKKVETAKAKVKKAEKDK) are compositionally biased toward basic and acidic residues.

The protein belongs to the peptidase S8 family. May undergo two steps of processing in its passage through the cell membrane: removal of the N-terminal signal sequence and cleavage of the C-terminal domain. Several active forms of Epr with molecular masses between 40 and 34 kDa were found in the medium of B.subtilis cultures. The size variation of the active forms expressed by the complete epr gene appears to be the result of partial removal of the C-terminus either by processing or degradation.

It localises to the secreted. The protein localises to the cell wall. With respect to regulation, requires Ca(2+) for stability. Activity is inhibited by phenylmethylsulfonyl fluoride (PMSF) and EDTA. Its function is as follows. Serine protease. Involved in the production of the competence and sporulation stimulating factor CSF. In addition, is essential for swarming motility. Plays a key role in DegU-mediated swarming motility. The protease activity is dispensable for swarming. Not essential for growth or sporulation. The chain is Minor extracellular protease Epr from Bacillus subtilis (strain 168).